The primary structure comprises 63 residues: Large ribosomal subunit protein bL28 (63 aa).

It belongs to the bacterial ribosomal protein bL28 family.

This chain is Large ribosomal subunit protein bL28, found in Dictyoglomus thermophilum (strain ATCC 35947 / DSM 3960 / H-6-12).